A 104-amino-acid chain; its full sequence is Cell cycle protein GpsB (104 aa).

Positions 34–72 (LDVVIQDYEVFQKKIERLEQEIHQLRTEAKRAASERQTR) form a coiled coil. The span at 60 to 71 (TEAKRAASERQT) shows a compositional bias: basic and acidic residues. Residues 60–82 (TEAKRAASERQTRHQTSPSVGST) are disordered. The span at 73–82 (HQTSPSVGST) shows a compositional bias: polar residues.

It belongs to the GpsB family. As to quaternary structure, forms polymers through the coiled coil domains. Interacts with PBP1, MreC and EzrA.

Its subcellular location is the cytoplasm. Divisome component that associates with the complex late in its assembly, after the Z-ring is formed, and is dependent on DivIC and PBP2B for its recruitment to the divisome. Together with EzrA, is a key component of the system that regulates PBP1 localization during cell cycle progression. Its main role could be the removal of PBP1 from the cell pole after pole maturation is completed. Also contributes to the recruitment of PBP1 to the division complex. Not essential for septum formation. The protein is Cell cycle protein GpsB of Halalkalibacterium halodurans (strain ATCC BAA-125 / DSM 18197 / FERM 7344 / JCM 9153 / C-125) (Bacillus halodurans).